The sequence spans 322 residues: Malate dehydrogenase 1 (322 aa).

NAD(+)-binding positions include 10–15 (GSGQIG) and Asp34. Substrate contacts are provided by Arg83 and Arg89. NAD(+) is bound by residues Asn96 and 119 to 121 (ITN). Substrate contacts are provided by Asn121 and Arg152. The active-site Proton acceptor is the His176.

Belongs to the LDH/MDH superfamily. MDH type 3 family.

The enzyme catalyses (S)-malate + NAD(+) = oxaloacetate + NADH + H(+). Its function is as follows. Catalyzes the reversible oxidation of malate to oxaloacetate. In Rhodopseudomonas palustris (strain BisB18), this protein is Malate dehydrogenase 1.